The chain runs to 396 residues: Ornithine aminotransferase 2 (396 aa).

Lys-255 carries the post-translational modification N6-(pyridoxal phosphate)lysine.

This sequence belongs to the class-III pyridoxal-phosphate-dependent aminotransferase family. OAT subfamily. Pyridoxal 5'-phosphate serves as cofactor.

It localises to the cytoplasm. It catalyses the reaction a 2-oxocarboxylate + L-ornithine = L-glutamate 5-semialdehyde + an L-alpha-amino acid. It functions in the pathway amino-acid biosynthesis; L-proline biosynthesis; L-glutamate 5-semialdehyde from L-ornithine: step 1/1. Its function is as follows. Catalyzes the interconversion of ornithine to glutamate semialdehyde. In Staphylococcus aureus (strain MRSA252), this protein is Ornithine aminotransferase 2.